The following is a 151-amino-acid chain: MRKVQEIEDLLAPVAAREKIEIVDVQYSKKAGDWVARIFIDKDSGVTISDCENISCIFGAFLDESDILKDSYVLEISSPGFKRVLKSEKSFRRFIGSKTRIRTFKPINNQRNFLGTLLNFDDGRIKINDVTNGVVEIEFSDIRKANIEADI.

It belongs to the RimP family.

The protein localises to the cytoplasm. In terms of biological role, required for maturation of 30S ribosomal subunits. This chain is Ribosome maturation factor RimP, found in Endomicrobium trichonymphae.